The sequence spans 220 residues: Deoxyribose-phosphate aldolase (220 aa).

D89 functions as the Proton donor/acceptor in the catalytic mechanism. Catalysis depends on K151, which acts as the Schiff-base intermediate with acetaldehyde. K180 acts as the Proton donor/acceptor in catalysis.

This sequence belongs to the DeoC/FbaB aldolase family. DeoC type 1 subfamily.

It is found in the cytoplasm. The enzyme catalyses 2-deoxy-D-ribose 5-phosphate = D-glyceraldehyde 3-phosphate + acetaldehyde. Its pathway is carbohydrate degradation; 2-deoxy-D-ribose 1-phosphate degradation; D-glyceraldehyde 3-phosphate and acetaldehyde from 2-deoxy-alpha-D-ribose 1-phosphate: step 2/2. Functionally, catalyzes a reversible aldol reaction between acetaldehyde and D-glyceraldehyde 3-phosphate to generate 2-deoxy-D-ribose 5-phosphate. The protein is Deoxyribose-phosphate aldolase of Streptococcus suis (strain 05ZYH33).